The chain runs to 110 residues: Large ribosomal subunit protein uL22 (110 aa).

It belongs to the universal ribosomal protein uL22 family. In terms of assembly, part of the 50S ribosomal subunit.

Its function is as follows. This protein binds specifically to 23S rRNA; its binding is stimulated by other ribosomal proteins, e.g. L4, L17, and L20. It is important during the early stages of 50S assembly. It makes multiple contacts with different domains of the 23S rRNA in the assembled 50S subunit and ribosome. In terms of biological role, the globular domain of the protein is located near the polypeptide exit tunnel on the outside of the subunit, while an extended beta-hairpin is found that lines the wall of the exit tunnel in the center of the 70S ribosome. This chain is Large ribosomal subunit protein uL22, found in Yersinia enterocolitica serotype O:8 / biotype 1B (strain NCTC 13174 / 8081).